The primary structure comprises 156 residues: Small ribosomal subunit protein uS7 (156 aa).

The protein belongs to the universal ribosomal protein uS7 family. In terms of assembly, part of the 30S ribosomal subunit. Contacts proteins S9 and S11.

Functionally, one of the primary rRNA binding proteins, it binds directly to 16S rRNA where it nucleates assembly of the head domain of the 30S subunit. Is located at the subunit interface close to the decoding center, probably blocks exit of the E-site tRNA. In Metamycoplasma arthritidis (strain 158L3-1) (Mycoplasma arthritidis), this protein is Small ribosomal subunit protein uS7.